The sequence spans 360 residues: C-C chemokine receptor type 4 (360 aa).

Over 1-39 (MNPTDIADTTLDESIYSNYYLYESIPKPCTKEGIKAFGE) the chain is Extracellular. Residues 40–67 (LFLPPLYSLVFVFGLLGNSVVVLVLFKY) traverse the membrane as a helical segment. The Cytoplasmic segment spans residues 68 to 77 (KRLRSMTDVY). Residues 78–98 (LLNLAISDLLFVFSLPFWGYY) traverse the membrane as a helical segment. The Extracellular segment spans residues 99–111 (AADQWVFGLGLCK). A disulfide bridge links Cys110 with Cys187. The helical transmembrane segment at 112–133 (MISWMYLVGFYSGIFFVMLMSI) threads the bilayer. Over 134-150 (DRYLAIVHAVFSLRART) the chain is Cytoplasmic. Residues 151 to 175 (LTYGVITSLATWSVAVFASLPGFLF) traverse the membrane as a helical segment. Residues 176 to 206 (STCYTERNHTYCKTKYSLNSTTWKVLSSLEI) are Extracellular-facing. Asn183 and Asn194 each carry an N-linked (GlcNAc...) asparagine glycan. A helical membrane pass occupies residues 207–226 (NILGLVIPLGIMLFCYSMII). The Cytoplasmic segment spans residues 227–242 (RTLQHCKNEKKNKAVK). A helical membrane pass occupies residues 243-267 (MIFAVVVLFLGFWTPYNIVLFLETL). Over 268 to 284 (VELEVLQDCTFERYLDY) the chain is Extracellular. Residues 285-308 (AIQATETLAFVHCCLNPIIYFFLG) form a helical membrane-spanning segment. Over 309-360 (EKFRKYILQLFKTCRGLFVLCQYCGLLQIYSADTPSSSYTQSTMDHDLHDAL) the chain is Cytoplasmic.

Belongs to the G-protein coupled receptor 1 family. Post-translationally, in natural killer cells, CCL22 binding induces phosphorylation on yet undefined Ser/Thr residues, most probably by beta-adrenergic receptor kinases 1 and 2. Predominantly expressed in the thymus, in peripheral blood leukocytes, including T-cells, mostly CD4+ cells, and basophils, and in platelets; at lower levels, in the spleen and in monocytes. Detected also in macrophages, IL-2-activated natural killer cells and skin-homing memory T-cells, mostly the ones expressing the cutaneous lymphocyte antigen (CLA). Expressed in brain microvascular and coronary artery endothelial cells.

The protein resides in the cell membrane. High affinity receptor for the C-C type chemokines CCL17/TARC, CCL22/MDC and CKLF isoform 1/CKLF1. The activity of this receptor is mediated by G(i) proteins which activate a phosphatidylinositol-calcium second messenger system. Can function as a chemoattractant homing receptor on circulating memory lymphocytes and as a coreceptor for some primary HIV-2 isolates. In the CNS, could mediate hippocampal-neuron survival. The protein is C-C chemokine receptor type 4 (CCR4) of Homo sapiens (Human).